The following is a 252-amino-acid chain: 4-hydroxy-tetrahydrodipicolinate reductase (252 aa).

Residues 8 to 13, 84 to 86, and 108 to 111 each bind NAD(+); these read GCCGKM, CST, and SANM. The active-site Proton donor/acceptor is histidine 141. Position 142 (histidine 142) interacts with (S)-2,3,4,5-tetrahydrodipicolinate. Lysine 145 acts as the Proton donor in catalysis. 151-152 contributes to the (S)-2,3,4,5-tetrahydrodipicolinate binding site; sequence GT.

Belongs to the DapB family.

The protein localises to the cytoplasm. The catalysed reaction is (S)-2,3,4,5-tetrahydrodipicolinate + NAD(+) + H2O = (2S,4S)-4-hydroxy-2,3,4,5-tetrahydrodipicolinate + NADH + H(+). It catalyses the reaction (S)-2,3,4,5-tetrahydrodipicolinate + NADP(+) + H2O = (2S,4S)-4-hydroxy-2,3,4,5-tetrahydrodipicolinate + NADPH + H(+). Its pathway is amino-acid biosynthesis; L-lysine biosynthesis via DAP pathway; (S)-tetrahydrodipicolinate from L-aspartate: step 4/4. In terms of biological role, catalyzes the conversion of 4-hydroxy-tetrahydrodipicolinate (HTPA) to tetrahydrodipicolinate. This Clostridium botulinum (strain Eklund 17B / Type B) protein is 4-hydroxy-tetrahydrodipicolinate reductase.